A 264-amino-acid polypeptide reads, in one-letter code: Triosephosphate isomerase (264 aa).

Position 13–15 (13–15 (NWK)) interacts with substrate. Catalysis depends on His106, which acts as the Electrophile. The active-site Proton acceptor is the Glu179. Substrate contacts are provided by residues Gly185, Ser223, and 244 to 245 (GG).

Belongs to the triosephosphate isomerase family. As to quaternary structure, homodimer.

It is found in the cytoplasm. The catalysed reaction is D-glyceraldehyde 3-phosphate = dihydroxyacetone phosphate. It functions in the pathway carbohydrate biosynthesis; gluconeogenesis. It participates in carbohydrate degradation; glycolysis; D-glyceraldehyde 3-phosphate from glycerone phosphate: step 1/1. Involved in the gluconeogenesis. Catalyzes stereospecifically the conversion of dihydroxyacetone phosphate (DHAP) to D-glyceraldehyde-3-phosphate (G3P). In Acinetobacter baumannii (strain SDF), this protein is Triosephosphate isomerase.